Consider the following 20-residue polypeptide: Collagenolytic protease 28 kDa (20 aa).

Residues 1-20 enclose the Peptidase S1 domain; that stretch reads IVGGQEASPGSWPXQVGLFF.

The protein belongs to the peptidase S1 family.

The enzyme catalyses Hydrolysis of proteins, with broad specificity for peptide bonds. Native collagen is cleaved about 75% of the length of the molecule from the N-terminus. Low activity on small molecule substrates of both trypsin and chymotrypsin.. Functionally, this enzyme is a serine protease capable of degrading the native triple helix of collagen. This chain is Collagenolytic protease 28 kDa, found in Paralithodes camtschaticus (Red king crab).